The following is a 616-amino-acid chain: Glucoamylase P (616 aa).

The signal sequence occupies residues 1–29 (MRLLPSSCAGALSLLCSLAIAAPTELKAR). Trp149 provides a ligand contact to substrate. Asn200 carries N-linked (GlcNAc...) asparagine glycosylation. Asp205 serves as the catalytic Proton acceptor. Catalysis depends on Glu208, which acts as the Proton donor. A glycan (N-linked (GlcNAc...) asparagine) is linked at Asn427. One can recognise a CBM20 domain in the interval 501–608 (VTSSCQVSIT…AVTTDDAWMG (108 aa)).

This sequence belongs to the glycosyl hydrolase 15 family.

It is found in the secreted. The catalysed reaction is Hydrolysis of terminal (1-&gt;4)-linked alpha-D-glucose residues successively from non-reducing ends of the chains with release of beta-D-glucose.. This chain is Glucoamylase P (GAMP), found in Amorphotheca resinae (Creosote fungus).